Reading from the N-terminus, the 368-residue chain is DNA replication and repair protein RecF (368 aa).

30-37 (GNNAQGKT) lines the ATP pocket.

The protein belongs to the RecF family.

It localises to the cytoplasm. Functionally, the RecF protein is involved in DNA metabolism; it is required for DNA replication and normal SOS inducibility. RecF binds preferentially to single-stranded, linear DNA. It also seems to bind ATP. The sequence is that of DNA replication and repair protein RecF from Streptococcus pyogenes serotype M12 (strain MGAS9429).